The following is a 481-amino-acid chain: Pyruvate kinase (481 aa).

Residue R33 coordinates substrate. Residues N35, S37, D67, and T68 each contribute to the K(+) site. 35–38 (NFSH) is a binding site for ATP. Residues R74 and K155 each coordinate ATP. E221 is a Mg(2+) binding site. Substrate contacts are provided by G244, D245, and T277. Residue D245 participates in Mg(2+) binding.

This sequence belongs to the pyruvate kinase family. In terms of assembly, homotetramer. The cofactor is Mg(2+). K(+) serves as cofactor.

The catalysed reaction is pyruvate + ATP = phosphoenolpyruvate + ADP + H(+). Its pathway is carbohydrate degradation; glycolysis; pyruvate from D-glyceraldehyde 3-phosphate: step 5/5. The chain is Pyruvate kinase (pyk) from Chlamydia muridarum (strain MoPn / Nigg).